We begin with the raw amino-acid sequence, 1087 residues long: A-kinase anchor protein 9 (1087 aa).

The stretch at 5-461 forms a coiled coil; sequence EVQCQAEKVR…REREKMERIQ (457 aa). The PKA-RII subunit binding domain stretch occupies residues 559–572; it reads SLQKVLEEKVAAAL. The stretch at 614–773 forms a coiled coil; the sequence is MESDVSALTW…SEKEDKTEVQ (160 aa). The segment covering 667–685 has biased composition (basic and acidic residues); that stretch reads VQDSETKQRERERQSRLHG. Positions 667–691 are disordered; it reads VQDSETKQRERERQSRLHGDLGVLE.

As to quaternary structure, interacts with the regulatory region of protein kinase N (PKN), protein phosphatase 2A (PP2A), protein phosphatase 1 (PP1) and the immature non-phosphorylated form of PKC epsilon. Interacts with CIP4 and FNBP1. Interacts with chloride intracellular channel proteins CLIC1, CLIC4 and CLIC5. CSNK1D binding promotes its centrosomal subcellular location. Interacts with GM130/GOLGA2; leading to recruitment to the Golgi apparatus. Interacts with KCNQ1; targets protein kinase A (PKA) catalytic and regulatory subunits and protein phosphatase 1 (PP1), to the heterodimer KCNQ1-KCNE1. Interacts with PDE4DIP; this interaction stabilizes both proteins. In complex with PDE4DIP, recruits CAMSAP2 to the Golgi apparatus. Forms a pericentrosomal complex with CDK5RAP2, EB1/MAPRE1 and PDE4DIP; within this complex, MAPRE1 binding to CDK5RAP2 may be mediated by PDE4DIP. The interaction with PDE4DIP is isoform-specific. Interacts with MAPRE1 and MAPRE3. Interacts (via C-terminus) with CAMSAP2; this interaction is much stronger in the presence of PDE4DIP. Interacts with CAMSAP3. Interacts (via C-terminus) with the gamma-tubulin ring complex (gamma-TuRC), composed of gamma-tubulin, TUBGCP2, TUBGCP3, TUBGCP4, TUBGCP5 and TUBGCP6. As to expression, highly expressed in gastric parietal cells.

The protein resides in the golgi apparatus. The protein localises to the cytoplasm. It is found in the cytoskeleton. It localises to the microtubule organizing center. Its subcellular location is the centrosome. Its function is as follows. Scaffolding protein that assembles several protein kinases and phosphatases on the centrosome and Golgi apparatus. Required to maintain the integrity of the Golgi apparatus. Required for microtubule nucleation at the cis-side of the Golgi apparatus. Required for association of the centrosomes with the poles of the bipolar mitotic spindle during metaphase. In complex with PDE4DIP, recruits CAMSAP2 to the Golgi apparatus and tethers non-centrosomal minus-end microtubules to the Golgi, an important step for polarized cell movement. In complex with PDE4DIP, EB1/MAPRE1 and CDK5RAP2, contributes to microtubules nucleation and extension also from the centrosome to the cell periphery. The interaction with PDE4DIP is isoform-specific. This chain is A-kinase anchor protein 9 (AKAP9), found in Oryctolagus cuniculus (Rabbit).